We begin with the raw amino-acid sequence, 302 residues long: Aspartate carbamoyltransferase catalytic subunit (302 aa).

R54 and T55 together coordinate carbamoyl phosphate. K82 lines the L-aspartate pocket. R104, H132, and Q135 together coordinate carbamoyl phosphate. R165 and R217 together coordinate L-aspartate. Carbamoyl phosphate-binding residues include G257 and P258.

The protein belongs to the aspartate/ornithine carbamoyltransferase superfamily. ATCase family. As to quaternary structure, heterododecamer (2C3:3R2) of six catalytic PyrB chains organized as two trimers (C3), and six regulatory PyrI chains organized as three dimers (R2).

The catalysed reaction is carbamoyl phosphate + L-aspartate = N-carbamoyl-L-aspartate + phosphate + H(+). It functions in the pathway pyrimidine metabolism; UMP biosynthesis via de novo pathway; (S)-dihydroorotate from bicarbonate: step 2/3. Functionally, catalyzes the condensation of carbamoyl phosphate and aspartate to form carbamoyl aspartate and inorganic phosphate, the committed step in the de novo pyrimidine nucleotide biosynthesis pathway. The polypeptide is Aspartate carbamoyltransferase catalytic subunit (Thermus thermophilus (strain ATCC BAA-163 / DSM 7039 / HB27)).